An 865-amino-acid chain; its full sequence is Protein translocase subunit SecA (865 aa).

Residues Gln-85, 103 to 107, and Asp-505 contribute to the ATP site; that span reads GEGKT. Zn(2+)-binding residues include Cys-847, Cys-849, Cys-858, and His-859.

The protein belongs to the SecA family. As to quaternary structure, monomer and homodimer. Part of the essential Sec protein translocation apparatus which comprises SecA, SecYEG and auxiliary proteins SecDF. Other proteins may also be involved. It depends on Zn(2+) as a cofactor.

It localises to the cell membrane. Its subcellular location is the cytoplasm. The enzyme catalyses ATP + H2O + cellular proteinSide 1 = ADP + phosphate + cellular proteinSide 2.. Its function is as follows. Part of the Sec protein translocase complex. Interacts with the SecYEG preprotein conducting channel. Has a central role in coupling the hydrolysis of ATP to the transfer of proteins into and across the cell membrane, serving as an ATP-driven molecular motor driving the stepwise translocation of polypeptide chains across the membrane. The sequence is that of Protein translocase subunit SecA from Lactococcus lactis subsp. lactis (strain IL1403) (Streptococcus lactis).